Consider the following 1090-residue polypeptide: UPF0507 protein C1Q_01007 (1090 aa).

Residues 289-436 form the VPS9 domain; that stretch reads FSVNQLLTDF…FEDFNKNTGN (148 aa).

Belongs to the UPF0507 family.

This chain is UPF0507 protein C1Q_01007, found in Saccharomyces cerevisiae (strain JAY291) (Baker's yeast).